The chain runs to 321 residues: Glutaminase (321 aa).

Serine 69, asparagine 120, glutamate 165, asparagine 172, tyrosine 196, tyrosine 248, and valine 266 together coordinate substrate.

This sequence belongs to the glutaminase family. Homotetramer.

The catalysed reaction is L-glutamine + H2O = L-glutamate + NH4(+). In Bacteroides thetaiotaomicron (strain ATCC 29148 / DSM 2079 / JCM 5827 / CCUG 10774 / NCTC 10582 / VPI-5482 / E50), this protein is Glutaminase.